The sequence spans 723 residues: MAEYTRLHNALALIRLRNPPVNAISTALLRDIKEGLQKAVIDHTIKAIVICGAEGKFSAGADIHGFSAPRTFGFTLGHVVDEIQRNEKPVVAAIQGMAFGGGLELALGCHYRIAHSEAQVGLPEVTLGLLPGARGTQLLPRLIGVPAALDLITSGRHILADEALKLGILDKVVNSDPVEEAIRFAQRVSDQPLESRRLCNKPIQSLPNMDTIFSEALLKMRRQHPGCLAQEACVRAVQAAVQYPYEVGVKKEEELFLYLFQSGQARALQYAFLAERKANKWSTPSGASWKTASARPVSSVGVVGLGTMGRGIVISFARARIPVIAVDSDKNQLATANKMITSVLEKEASKMQQSGHPWSGPKPRLTSSMKELGGVDLVIEAVFEEMSLKKQVFAELSAICKPEAFLCTNTSALDVDEIASSTDRPHLVIGTHFFSPAHVMKLLEVIPSQYSSPTTIATVMNLSKKIKKIGVVVGNCFGFVGNRMLNPYYNQAYFLLEEGSKPEEVDQVLEEFGFKMGPFRVSDLAGLDVGWKSRKGQGLTGPTLPPGTPARKRGNRRYCPIPDVLCELGRFGQKTGKGWYQYDKPLGRIHKADPWLSKFLSQYRETHHIEPRTISQDEILERCLYSLINEAFRILGEGIAASPEHIDVVYLHGYGWPRHKGGPMFYASTVGLPTVLEKLQKYYRQNPDIPQLEPSDYLKKLASQGNPPQKEWQSLAGSPSSKL.

Positions 1–282 (MAEYTRLHNA…LAERKANKWS (282 aa)) are enoyl-CoA hydratase / isomerase. K38 carries the post-translational modification N6-succinyllysine. Position 101 (G101) interacts with substrate. K165 carries the post-translational modification N6-acetyllysine; alternate. N6-succinyllysine; alternate is present on K165. Position 171 is an N6-acetyllysine (K171). Residue K219 is modified to N6-acetyllysine; alternate. N6-succinyllysine; alternate is present on K219. An N6-acetyllysine modification is found at K250. Residues K280 and K290 each carry the N6-succinyllysine modification. The segment at 283 to 572 (TPSGASWKTA…DVLCELGRFG (290 aa)) is 3-hydroxyacyl-CoA dehydrogenase. An N6-acetyllysine mark is found at K346, K350, and K464. K532 carries the post-translational modification N6-succinyllysine. T548 carries the post-translational modification Phosphothreonine. Position 577 is an N6-succinyllysine (K577). An N6-acetyllysine; alternate mark is found at K584, K591, and K710. N6-succinyllysine; alternate is present on residues K584, K591, and K710. The segment at 699 to 723 (KKLASQGNPPQKEWQSLAGSPSSKL) is disordered. The span at 703–723 (SQGNPPQKEWQSLAGSPSSKL) shows a compositional bias: polar residues. The residue at position 718 (S718) is a Phosphoserine. Residues 721-723 (SKL) carry the Microbody targeting signal motif. K722 is modified (N6-succinyllysine).

In the N-terminal section; belongs to the enoyl-CoA hydratase/isomerase family. It in the C-terminal section; belongs to the 3-hydroxyacyl-CoA dehydrogenase family. In terms of assembly, monomer. In terms of processing, acetylated, leading to enhanced enzyme activity. Acetylation is enhanced by up to 80% after treatment either with trichostin A (TSA) or with nicotinamide (NAM) with highest increase on Lys-346. Acetylation and enzyme activity increased by about 1.5% on addition of fatty acids.

The protein localises to the peroxisome. The enzyme catalyses a (3S)-3-hydroxyacyl-CoA = a (2E)-enoyl-CoA + H2O. It catalyses the reaction a 4-saturated-(3S)-3-hydroxyacyl-CoA = a (3E)-enoyl-CoA + H2O. The catalysed reaction is a (3Z)-enoyl-CoA = a 4-saturated (2E)-enoyl-CoA. It carries out the reaction a (3E)-enoyl-CoA = a 4-saturated (2E)-enoyl-CoA. The enzyme catalyses a (3S)-3-hydroxyacyl-CoA + NAD(+) = a 3-oxoacyl-CoA + NADH + H(+). It catalyses the reaction (2S,3S)-3-hydroxy-2-methylbutanoyl-CoA = (2E)-2-methylbut-2-enoyl-CoA + H2O. The catalysed reaction is (3S)-hydroxyhexadecanoyl-CoA + NAD(+) = 3-oxohexadecanoyl-CoA + NADH + H(+). It carries out the reaction (3S)-hydroxyhexadecanoyl-CoA = (2E)-hexadecenoyl-CoA + H2O. The enzyme catalyses (2E)-hexadecenedioyl-CoA + H2O = (3S)-hydroxyhexadecanedioyl-CoA. It catalyses the reaction (3S)-hydroxyhexadecanedioyl-CoA + NAD(+) = 3-oxohexadecanedioyl-CoA + NADH + H(+). The catalysed reaction is (3E,5Z)-tetradecadienoyl-CoA = (2E,5Z)-tetradecadienoyl-CoA. It carries out the reaction (3E,5Z)-octadienoyl-CoA = (2E,5Z)-octadienoyl-CoA. The enzyme catalyses (3S)-hydroxydecanoyl-CoA + NAD(+) = 3-oxodecanoyl-CoA + NADH + H(+). It catalyses the reaction (3E)-decenoyl-CoA = (2E)-decenoyl-CoA. The catalysed reaction is (3Z)-hexenoyl-CoA = (2E)-hexenoyl-CoA. It carries out the reaction (3E)-hexenoyl-CoA = (2E)-hexenoyl-CoA. The enzyme catalyses (3S)-hydroxydecanoyl-CoA = (2E)-decenoyl-CoA + H2O. It catalyses the reaction (3S)-hydroxyhexanoyl-CoA = (2E)-hexenoyl-CoA + H2O. The protein operates within lipid metabolism; fatty acid beta-oxidation. Enzyme activity enhanced by acetylation. Functionally, peroxisomal trifunctional enzyme possessing 2-enoyl-CoA hydratase, 3-hydroxyacyl-CoA dehydrogenase, and delta 3, delta 2-enoyl-CoA isomerase activities. Catalyzes two of the four reactions of the long chain fatty acids peroxisomal beta-oxidation pathway. Can also use branched-chain fatty acids such as 2-methyl-2E-butenoyl-CoA as a substrate, which is hydrated into (2S,3S)-3-hydroxy-2-methylbutanoyl-CoA. Optimal isomerase for 2,5 double bonds into 3,5 form isomerization in a range of enoyl-CoA species. Also able to isomerize both 3-cis and 3-trans double bonds into the 2-trans form in a range of enoyl-CoA species. Regulates the amount of medium-chain dicarboxylic fatty acids which are essential regulators of all fatty acid oxidation pathways. Also involved in the degradation of long-chain dicarboxylic acids through peroxisomal beta-oxidation. This Pongo abelii (Sumatran orangutan) protein is Peroxisomal bifunctional enzyme (EHHADH).